The chain runs to 275 residues: AA9 family lytic polysaccharide monooxygenase AA9-X282 (275 aa).

Residues 1–17 (MFTKLIIAASLAASVAA) form the signal peptide. H18 provides a ligand contact to Cu(2+). T20 is modified (phosphothreonine). Phosphoserine is present on residues S43 and S49. Residue T50 is modified to Phosphothreonine. S58 is modified (phosphoserine). C66 and C185 are disulfide-bonded. Residue H96 coordinates Cu(2+). S130 is modified (phosphoserine). O2 contacts are provided by H171 and Q180. Y182 serves as a coordination point for Cu(2+). Residues 236–265 (TSPAVANTPYPTTATWNTALQPSTVPTAVP) are X282 extension. Residues 268-275 (GTPGIGKA) carry the 9res motif motif.

It belongs to the polysaccharide monooxygenase AA9 family. It depends on Cu(2+) as a cofactor.

It is found in the secreted. It carries out the reaction [(1-&gt;4)-beta-D-glucosyl]n+m + reduced acceptor + O2 = 4-dehydro-beta-D-glucosyl-[(1-&gt;4)-beta-D-glucosyl]n-1 + [(1-&gt;4)-beta-D-glucosyl]m + acceptor + H2O.. Its function is as follows. Lytic polysaccharide monooxygenase (LPMO) that depolymerizes crystalline and amorphous polysaccharides via the oxidation of scissile alpha- or beta-(1-4)-glycosidic bonds, yielding C1 oxidation products. Catalysis by LPMOs requires the reduction of the active-site copper from Cu(II) to Cu(I) by a reducing agent and H(2)O(2) or O(2) as a cosubstrate. Shows only weak binding properties to cellulose, and low cellulolytic oxidative activity which questions the involvement of X282 extension-containing AA9 proteins in the degradation of plant cell wall and opens new avenues as to the divergence of function of some AA9 members. This is AA9 family lytic polysaccharide monooxygenase AA9-X282 from Trametes coccinea (strain BRFM310) (Pycnoporus coccineus).